The following is a 308-amino-acid chain: Ribonuclease H2 subunit B (308 aa).

N-acetylalanine is present on A2. An N6-acetyllysine modification is found at K292. S293 is modified (phosphoserine).

This sequence belongs to the RNase H2 subunit B family. In terms of assembly, the RNase H2 complex is a heterotrimer composed of the catalytic subunit RNASEH2A and the non-catalytic subunits RNASEH2B and RNASEH2C.

It localises to the nucleus. Functionally, non catalytic subunit of RNase H2, an endonuclease that specifically degrades the RNA of RNA:DNA hybrids. Participates in DNA replication, possibly by mediating the removal of lagging-strand Okazaki fragment RNA primers during DNA replication. Mediates the excision of single ribonucleotides from DNA:RNA duplexes. The polypeptide is Ribonuclease H2 subunit B (Rnaseh2b) (Mus musculus (Mouse)).